A 185-amino-acid polypeptide reads, in one-letter code: Crossover junction endodeoxyribonuclease RuvC (185 aa).

Residues Asp7, Glu66, and Asp137 contribute to the active site. Asp7, Glu66, and Asp137 together coordinate Mg(2+).

It belongs to the RuvC family. As to quaternary structure, homodimer which binds Holliday junction (HJ) DNA. The HJ becomes 2-fold symmetrical on binding to RuvC with unstacked arms; it has a different conformation from HJ DNA in complex with RuvA. In the full resolvosome a probable DNA-RuvA(4)-RuvB(12)-RuvC(2) complex forms which resolves the HJ. Mg(2+) serves as cofactor.

The protein localises to the cytoplasm. It carries out the reaction Endonucleolytic cleavage at a junction such as a reciprocal single-stranded crossover between two homologous DNA duplexes (Holliday junction).. Its function is as follows. The RuvA-RuvB-RuvC complex processes Holliday junction (HJ) DNA during genetic recombination and DNA repair. Endonuclease that resolves HJ intermediates. Cleaves cruciform DNA by making single-stranded nicks across the HJ at symmetrical positions within the homologous arms, yielding a 5'-phosphate and a 3'-hydroxyl group; requires a central core of homology in the junction. The consensus cleavage sequence is 5'-(A/T)TT(C/G)-3'. Cleavage occurs on the 3'-side of the TT dinucleotide at the point of strand exchange. HJ branch migration catalyzed by RuvA-RuvB allows RuvC to scan DNA until it finds its consensus sequence, where it cleaves and resolves the cruciform DNA. This is Crossover junction endodeoxyribonuclease RuvC from Anaeromyxobacter sp. (strain K).